A 347-amino-acid chain; its full sequence is Nuclear distribution protein nudE-like 1 (347 aa).

Positions Gln-28–Val-190 form a coiled coil. A self-association region spans residues Val-56–Ser-166. The interval Asp-64–Glu-189 is interaction with KATNB1. A required for interaction with PAFAH1B1 region spans residues Tyr-114–Ile-133. Residues Arg-175–Val-347 are interaction with CENPF. The segment at Glu-189–Val-256 is interaction with YWHAE. The interval Thr-191 to Val-347 is interaction with NEFL. Residues Ala-195–Val-256 form an interaction with KATNA1 region. Ser-215 is modified (phosphoserine). At Thr-219 the chain carries Phosphothreonine; by CDK1 and MAPK1. Position 231 is a phosphoserine (Ser-231). Residues Thr-241–Gln-280 form an interaction with DISC1 region. Residue Ser-242 is modified to Phosphoserine; by CDK1. Thr-245 is modified (phosphothreonine; by CDK1 and MAPK1). The tract at residues Val-256 to Val-291 is required for localization to the centrosome and interaction with dynein, dynactin, tubulin gamma, PCM1 and PCNT. Cys-273 carries S-palmitoyl cysteine; by ZDHHC2, ZDHHC3 and ZDHHC7 lipidation. The disordered stretch occupies residues Lys-314 to Val-347. The residue at position 346 (Ser-346) is a Phosphoserine.

This sequence belongs to the nudE family. As to quaternary structure, self-associates. Interacts with DISC1, dynein, dynactin, tubulin gamma, KATNA1, KATNB1, microtubules, PAFAH1B1, PCM1, PCNT, and YWHAE. Interacts directly with NEFL and indirectly with NEFH. Interacts (via C-terminus) with CENPF. Interacts with ZNF365. Interacts with PLEKHM1 (via N- and C-terminus). Interacts with GTP-bound RAB9A; the interaction may lead to RAB9A-dynein motor tethering. In terms of processing, phosphorylated in mitosis. Can be phosphorylated by CDK1, CDK5 and MAPK1. Phosphorylation by CDK5 promotes interaction with KATNA1 and YWHAE. Post-translationally, palmitoylation at Cys-273 reduces affinity for dynein.

It is found in the cytoplasm. The protein localises to the cytoskeleton. The protein resides in the microtubule organizing center. Its subcellular location is the centrosome. It localises to the chromosome. It is found in the centromere. The protein localises to the kinetochore. The protein resides in the spindle. Its function is as follows. Required for organization of the cellular microtubule array and microtubule anchoring at the centrosome. May regulate microtubule organization at least in part by targeting the microtubule severing protein KATNA1 to the centrosome. Also positively regulates the activity of the minus-end directed microtubule motor protein dynein. May enhance dynein-mediated microtubule sliding by targeting dynein to the microtubule plus ends. Required for several dynein- and microtubule-dependent processes such as the maintenance of Golgi integrity, the centripetal motion of secretory vesicles and the coupling of the nucleus and centrosome. Also required during brain development for the migration of newly formed neurons from the ventricular/subventricular zone toward the cortical plate. Required for mitosis in some cell types but appears to be dispensible for mitosis in cortical neuronal progenitors, which instead requires NDE1. Facilitates the polymerization of neurofilaments from the individual subunits NEFH and NEFL. Positively regulates lysosome peripheral distribution and ruffled border formation in osteoclasts. Plays a role, together with DISC1, in the regulation of neurite outgrowth. May act as a RAB9A/B effector that tethers RAB9-associated late endosomes to the dynein motor for their retrograde transport to the trans-Golgi network. This Macaca fascicularis (Crab-eating macaque) protein is Nuclear distribution protein nudE-like 1 (NDEL1).